The following is a 263-amino-acid chain: Thiamine thiazole synthase (263 aa).

Residues Ser-43, 62 to 63, Gly-70, Val-134, and 160 to 162 contribute to the NAD(+) site; these read ER and HID. Asp-162 and His-177 together coordinate Fe cation. NAD(+) contacts are provided by Ser-180 and Met-227. Glycine is bound at residue Arg-237.

This sequence belongs to the THI4 family. Homooctamer; tetramer of dimers. Fe(2+) serves as cofactor.

It catalyses the reaction hydrogen sulfide + glycine + NAD(+) = ADP-5-ethyl-4-methylthiazole-2-carboxylate + nicotinamide + 3 H2O + H(+). It participates in cofactor biosynthesis; thiamine diphosphate biosynthesis. Its function is as follows. Involved in the biosynthesis of the thiazole moiety of thiamine. Catalyzes the conversion of NAD and glycine to adenosine diphosphate 5-(2-hydroxyethyl)-4-methylthiazole-2-carboxylate (ADT), an adenylated thiazole intermediate, using free sulfide as a source of sulfur. In Methanococcus aeolicus (strain ATCC BAA-1280 / DSM 17508 / OCM 812 / Nankai-3), this protein is Thiamine thiazole synthase.